Consider the following 406-residue polypeptide: Probable UDP-arabinose 4-epimerase 3 (406 aa).

Over 1–26 (MIPLNRRASQTRGGMEYFDARRKPHN) the chain is Cytoplasmic. The chain crosses the membrane as a helical; Signal-anchor for type II membrane protein span at residues 27–44 (VGKVIAALVLTTLCIFIL). Residues 45–406 (KQSPGFGGSS…KSHPRGYGSN (362 aa)) are Lumenal-facing. 65–96 (HVLVTGGAGYIGSHASLRLLKDNYRVTIVDNL) contributes to the NAD(+) binding site. The active-site Proton acceptor is the Tyr-213.

It belongs to the NAD(P)-dependent epimerase/dehydratase family. It depends on NAD(+) as a cofactor.

The protein localises to the golgi apparatus. It is found in the golgi stack membrane. The enzyme catalyses UDP-beta-L-arabinopyranose = UDP-alpha-D-xylose. It participates in nucleotide-sugar biosynthesis; UDP-L-arabinose biosynthesis; UDP-L-arabinose from UDP-alpha-D-xylose: step 1/1. Its pathway is cell wall biogenesis; cell wall polysaccharide biosynthesis. The chain is Probable UDP-arabinose 4-epimerase 3 (UEL-3) from Oryza sativa subsp. japonica (Rice).